Here is a 162-residue protein sequence, read N- to C-terminus: NADH-quinone oxidoreductase subunit I 1 (162 aa).

4Fe-4S ferredoxin-type domains are found at residues L52 to G82 and V93 to N122. The [4Fe-4S] cluster site is built by C62, C65, C68, C72, C102, C105, C108, and C112.

This sequence belongs to the complex I 23 kDa subunit family. NDH-1 is composed of 14 different subunits. Subunits NuoA, H, J, K, L, M, N constitute the membrane sector of the complex. Requires [4Fe-4S] cluster as cofactor.

It is found in the cell inner membrane. It catalyses the reaction a quinone + NADH + 5 H(+)(in) = a quinol + NAD(+) + 4 H(+)(out). NDH-1 shuttles electrons from NADH, via FMN and iron-sulfur (Fe-S) centers, to quinones in the respiratory chain. The immediate electron acceptor for the enzyme in this species is believed to be ubiquinone. Couples the redox reaction to proton translocation (for every two electrons transferred, four hydrogen ions are translocated across the cytoplasmic membrane), and thus conserves the redox energy in a proton gradient. The protein is NADH-quinone oxidoreductase subunit I 1 of Rhodopseudomonas palustris (strain ATCC BAA-98 / CGA009).